Here is a 332-residue protein sequence, read N- to C-terminus: Holliday junction branch migration complex subunit RuvB (332 aa).

The segment at Met-1 to Tyr-181 is large ATPase domain (RuvB-L). ATP is bound by residues Leu-20, Arg-21, Gly-62, Lys-65, Thr-66, Thr-67, Glu-128 to Phe-130, Arg-171, Tyr-181, and Arg-218. Thr-66 serves as a coordination point for Mg(2+). The tract at residues Ala-182–Asp-252 is small ATPAse domain (RuvB-S). The interval His-255–Lys-332 is head domain (RuvB-H). Residues Arg-291, Arg-310, Arg-312, and Arg-315 each coordinate DNA.

It belongs to the RuvB family. Homohexamer. Forms an RuvA(8)-RuvB(12)-Holliday junction (HJ) complex. HJ DNA is sandwiched between 2 RuvA tetramers; dsDNA enters through RuvA and exits via RuvB. An RuvB hexamer assembles on each DNA strand where it exits the tetramer. Each RuvB hexamer is contacted by two RuvA subunits (via domain III) on 2 adjacent RuvB subunits; this complex drives branch migration. In the full resolvosome a probable DNA-RuvA(4)-RuvB(12)-RuvC(2) complex forms which resolves the HJ.

The protein localises to the cytoplasm. The catalysed reaction is ATP + H2O = ADP + phosphate + H(+). The RuvA-RuvB-RuvC complex processes Holliday junction (HJ) DNA during genetic recombination and DNA repair, while the RuvA-RuvB complex plays an important role in the rescue of blocked DNA replication forks via replication fork reversal (RFR). RuvA specifically binds to HJ cruciform DNA, conferring on it an open structure. The RuvB hexamer acts as an ATP-dependent pump, pulling dsDNA into and through the RuvAB complex. RuvB forms 2 homohexamers on either side of HJ DNA bound by 1 or 2 RuvA tetramers; 4 subunits per hexamer contact DNA at a time. Coordinated motions by a converter formed by DNA-disengaged RuvB subunits stimulates ATP hydrolysis and nucleotide exchange. Immobilization of the converter enables RuvB to convert the ATP-contained energy into a lever motion, pulling 2 nucleotides of DNA out of the RuvA tetramer per ATP hydrolyzed, thus driving DNA branch migration. The RuvB motors rotate together with the DNA substrate, which together with the progressing nucleotide cycle form the mechanistic basis for DNA recombination by continuous HJ branch migration. Branch migration allows RuvC to scan DNA until it finds its consensus sequence, where it cleaves and resolves cruciform DNA. In Streptococcus pneumoniae (strain JJA), this protein is Holliday junction branch migration complex subunit RuvB.